The sequence spans 151 residues: Probable ribonuclease P/MRP protein subunit POP5 (151 aa).

This sequence belongs to the eukaryotic/archaeal RNase P protein component 2 family. Component of nuclear RNase P and RNase MRP ribonucleoproteins. Interacts with GAF1/RPP30.

Its subcellular location is the nucleus. The protein resides in the nucleolus. Functionally, essential protein required during embryogenesis. Component of ribonuclease P, a protein complex that generates mature tRNA molecules by cleaving their 5'-ends. Also a component of RNase MRP. This chain is Probable ribonuclease P/MRP protein subunit POP5 (EMB1687), found in Arabidopsis thaliana (Mouse-ear cress).